Reading from the N-terminus, the 152-residue chain is Aspartate carbamoyltransferase regulatory chain (152 aa).

Positions 109, 114, 138, and 141 each coordinate Zn(2+).

The protein belongs to the PyrI family. As to quaternary structure, contains catalytic and regulatory chains. Zn(2+) is required as a cofactor.

Functionally, involved in allosteric regulation of aspartate carbamoyltransferase. In Thermoplasma volcanium (strain ATCC 51530 / DSM 4299 / JCM 9571 / NBRC 15438 / GSS1), this protein is Aspartate carbamoyltransferase regulatory chain.